Consider the following 216-residue polypeptide: Probable methylthioribulose-1-phosphate dehydratase (216 aa).

Residue Cys-87 coordinates substrate. His-105 and His-107 together coordinate Zn(2+). Glu-129 (proton donor/acceptor) is an active-site residue.

The protein belongs to the aldolase class II family. MtnB subfamily. Zn(2+) is required as a cofactor.

It is found in the cytoplasm. It carries out the reaction 5-(methylsulfanyl)-D-ribulose 1-phosphate = 5-methylsulfanyl-2,3-dioxopentyl phosphate + H2O. Its pathway is amino-acid biosynthesis; L-methionine biosynthesis via salvage pathway; L-methionine from S-methyl-5-thio-alpha-D-ribose 1-phosphate: step 2/6. Functionally, catalyzes the dehydration of methylthioribulose-1-phosphate (MTRu-1-P) into 2,3-diketo-5-methylthiopentyl-1-phosphate (DK-MTP-1-P). The protein is Probable methylthioribulose-1-phosphate dehydratase of Drosophila persimilis (Fruit fly).